A 127-amino-acid polypeptide reads, in one-letter code: Ribonuclease P protein component 1 (127 aa).

This sequence belongs to the eukaryotic/archaeal RNase P protein component 1 family. In terms of assembly, consists of a catalytic RNA component and at least 4 protein subunits. Forms a subcomplex with Rnp4 which stimulates the catalytic RNA.

The protein resides in the cytoplasm. The catalysed reaction is Endonucleolytic cleavage of RNA, removing 5'-extranucleotides from tRNA precursor.. Functionally, part of ribonuclease P, a protein complex that generates mature tRNA molecules by cleaving their 5'-ends. The RNA is catalytic, but its KM for pre-tRNA is 170-fold decreased in the presence of the 4 known protein subunits (Rnp1-4). The protein subunits also decrease the amount of Mg(2+) needed for activity. The chain is Ribonuclease P protein component 1 from Pyrococcus furiosus (strain ATCC 43587 / DSM 3638 / JCM 8422 / Vc1).